A 332-amino-acid chain; its full sequence is Polyprenyl transferase yanG (332 aa).

Helical transmembrane passes span 42 to 62 (IWGA…LAFA), 72 to 92 (VTAT…FFVV), 145 to 165 (PAVT…PFMK), 170 to 190 (FPQV…WVGV), 200 to 220 (ALPL…FYAT), 242 to 262 (VKIL…MTAL), 266 to 286 (LSLI…PWHV), and 300 to 320 (VFKA…LELV).

The protein belongs to the UbiA prenyltransferase family. It depends on Mg(2+) as a cofactor.

It localises to the membrane. It participates in secondary metabolite biosynthesis; terpenoid biosynthesis. Its function is as follows. Polyprenyl transferase; part of the gene cluster that mediates the biosynthesis of yanuthone D, a fungal isoprenoid epoxycyclohexenone that acts as an antibiotic against fungi and bacteria. The first step of the pathway is the synthesis of 6-methylsalicylic acid (6-MSA) by the polyketide synthase yanA. 6-MSA is then converted to m-cresol by the decarboxylase yanB. The cytochrome P450 monooxygenase yanC then catalyzes the oxidation of m-cresol to toluquinol. Epoxidation of toluquinol is then performed by the short chain dehydrogenase yanD, with the help of yanE, and a further prenylation by yanG leads to 7-deacetoxyyanuthone A. The next step is the hydroxylation of C-22 of 7-deacetoxyyanuthone A by the cytochrome P450 monooxygenase yanH to yield 22-deacetylyanuthone A. O-Mevalon transferase yanI then attaches mevalon to the hydroxyl group of 22-deacetylyanuthone A to produce yanuthone E. Finally, the FAD-dependent monooxygenase yanF oxidizes the hydroxyl group at C15 of yanuthone E to form yanuthone D. Furthermore, several branching points in the pathway lead to the production of yanuthones F and G from 7-deacetoxyyanuthone A; yanuthones H and I from 22-deacetylyanuthone A; and yanuthone J from yanuthone E. YanG is also involved in the synthesis of yanuthone X1 which does not have 6-methylsalicylic acid (6-MSA) as precursor. This Aspergillus niger (strain ATCC 1015 / CBS 113.46 / FGSC A1144 / LSHB Ac4 / NCTC 3858a / NRRL 328 / USDA 3528.7) protein is Polyprenyl transferase yanG.